The chain runs to 392 residues: GTPase Obg (392 aa).

Residues 1–159 enclose the Obg domain; it reads MKFIDEALIR…RDLQLELMLL (159 aa). Residues 160–333 enclose the OBG-type G domain; it reads ADVGMLGLPN…LCRDIMDFIE (174 aa). Residues 166–173, 191–195, 213–216, 283–286, and 314–316 contribute to the GTP site; these read GLPNAGKS, FTTLV, DIPG, NKID, and SAA. Residues Ser-173 and Thr-193 each coordinate Mg(2+). Positions 362 to 392 are disordered; that stretch reads EQVFTEDDQEGDDWDDWSEDDEEGVEIIYKP. Over residues 365-386 the composition is skewed to acidic residues; sequence FTEDDQEGDDWDDWSEDDEEGV.

It belongs to the TRAFAC class OBG-HflX-like GTPase superfamily. OBG GTPase family. As to quaternary structure, monomer. Mg(2+) serves as cofactor.

Its subcellular location is the cytoplasm. An essential GTPase which binds GTP, GDP and possibly (p)ppGpp with moderate affinity, with high nucleotide exchange rates and a fairly low GTP hydrolysis rate. Plays a role in control of the cell cycle, stress response, ribosome biogenesis and in those bacteria that undergo differentiation, in morphogenesis control. This Histophilus somni (strain 129Pt) (Haemophilus somnus) protein is GTPase Obg.